The primary structure comprises 124 residues: Large ribosomal subunit protein bL12 (124 aa).

Belongs to the bacterial ribosomal protein bL12 family. As to quaternary structure, homodimer. Part of the ribosomal stalk of the 50S ribosomal subunit. Forms a multimeric L10(L12)X complex, where L10 forms an elongated spine to which 2 to 4 L12 dimers bind in a sequential fashion. Binds GTP-bound translation factors.

Forms part of the ribosomal stalk which helps the ribosome interact with GTP-bound translation factors. Is thus essential for accurate translation. This Sulfurovum sp. (strain NBC37-1) protein is Large ribosomal subunit protein bL12.